We begin with the raw amino-acid sequence, 133 residues long: Small ribosomal subunit protein uS9 (133 aa).

Residues 97-113 (SKQELKSHGFLTRDPRK) show a composition bias toward basic and acidic residues. The disordered stretch occupies residues 97-133 (SKQELKSHGFLTRDPRKKERKKYGHKKARKSFQFSKR). Over residues 114–133 (KERKKYGHKKARKSFQFSKR) the composition is skewed to basic residues.

It belongs to the universal ribosomal protein uS9 family.

This chain is Small ribosomal subunit protein uS9, found in Chlamydia abortus (strain DSM 27085 / S26/3) (Chlamydophila abortus).